Consider the following 330-residue polypeptide: Serpentine receptor class J-38 (330 aa).

The next 7 helical transmembrane spans lie at 6–26 (IYIF…PIFV), 43–63 (LLLF…VVPI), 98–118 (LVAS…LVIY), 135–155 (LLLS…LGYA), 200–220 (TIIW…LALL), 253–273 (IPIV…IFGI), and 285–305 (GALG…LPIF).

Belongs to the nematode receptor-like protein srj family.

Its subcellular location is the membrane. The protein is Serpentine receptor class J-38 (srj-38) of Caenorhabditis elegans.